Reading from the N-terminus, the 67-residue chain is MKAKELREKAPEELNLQLNDLKTELFTLRFQLATGQLENPMRIKEVKKSIAQIKTILREEELKACED.

The protein belongs to the universal ribosomal protein uL29 family.

This is Large ribosomal subunit protein uL29 from Clostridium acetobutylicum (strain ATCC 824 / DSM 792 / JCM 1419 / IAM 19013 / LMG 5710 / NBRC 13948 / NRRL B-527 / VKM B-1787 / 2291 / W).